Here is a 712-residue protein sequence, read N- to C-terminus: Saccharolysin (712 aa).

S73 bears the Phosphoserine mark. A Zn(2+)-binding site is contributed by H501. E502 is an active-site residue. 2 residues coordinate Zn(2+): H505 and H508.

Belongs to the peptidase M3 family. The cofactor is Zn(2+).

The protein localises to the cytoplasm. The enzyme catalyses Cleavage of Pro-|-Phe and Ala-|-Ala bonds.. Its function is as follows. Could be involved in late stage of protein degradation. This Saccharomyces cerevisiae (strain ATCC 204508 / S288c) (Baker's yeast) protein is Saccharolysin (PRD1).